The chain runs to 540 residues: Cobalt-factor III methyltransferase (540 aa).

Positions 402, 405, 439, and 443 each coordinate [4Fe-4S] cluster.

It in the N-terminal section; belongs to the precorrin methyltransferase family. Requires [4Fe-4S] cluster as cofactor.

It catalyses the reaction Co(II)-factor III + AH2 + S-adenosyl-L-methionine = Co-precorrin-4 + A + S-adenosyl-L-homocysteine. It participates in cofactor biosynthesis; adenosylcobalamin biosynthesis. Methyltransferase that catalyzes the reduction, ring contraction and methylation of C-17 in cobalt-factor III to form cobalt-precorrin-4. Is also able to convert cobalt-precorrin-3 to cobalt-precorrin-4. The protein is Cobalt-factor III methyltransferase (cbiH60) of Priestia megaterium (Bacillus megaterium).